We begin with the raw amino-acid sequence, 148 residues long: MKVIFLKDVKGKGKKGETKNVADGYANNFLIKNGYAVEANNAALSTLSAQKKKEDKLAAEELAEAKALKEKMENLTVELKAKSGEGGRLFGSITSKQIAQALEKTHGIKIDKRKMDLPEAIRALGHTKVPVKLHHEVTATLDVHVSEE.

This sequence belongs to the bacterial ribosomal protein bL9 family.

Binds to the 23S rRNA. This chain is Large ribosomal subunit protein bL9, found in Listeria monocytogenes serotype 4a (strain HCC23).